The following is a 146-amino-acid chain: Anti-sigma F factor (146 aa).

This sequence belongs to the anti-sigma-factor family.

It carries out the reaction L-seryl-[protein] + ATP = O-phospho-L-seryl-[protein] + ADP + H(+). The enzyme catalyses L-threonyl-[protein] + ATP = O-phospho-L-threonyl-[protein] + ADP + H(+). Its function is as follows. Binds to sigma F and blocks its ability to form an RNA polymerase holoenzyme (E-sigma F). Phosphorylates SpoIIAA on a serine residue. This phosphorylation may enable SpoIIAA to act as an anti-anti-sigma factor that counteracts SpoIIAB and thus releases sigma F from inhibition. The protein is Anti-sigma F factor of Bacillus licheniformis (strain ATCC 14580 / DSM 13 / JCM 2505 / CCUG 7422 / NBRC 12200 / NCIMB 9375 / NCTC 10341 / NRRL NRS-1264 / Gibson 46).